Consider the following 273-residue polypeptide: Undecaprenyl-diphosphatase (273 aa).

A run of 8 helical transmembrane segments spans residues 7–27 (LWIA…PVSS), 45–65 (AETF…VMFW), 89–109 (LTLI…LLLH), 115–135 (LFNP…LIAA), 152–171 (TYRQ…WPGF), 189–209 (YAAS…ATGL), 221–241 (ADFP…LIAI), and 253–273 (FIPF…LFVL).

It belongs to the UppP family.

It is found in the cell inner membrane. It carries out the reaction di-trans,octa-cis-undecaprenyl diphosphate + H2O = di-trans,octa-cis-undecaprenyl phosphate + phosphate + H(+). Its function is as follows. Catalyzes the dephosphorylation of undecaprenyl diphosphate (UPP). Confers resistance to bacitracin. In Erwinia tasmaniensis (strain DSM 17950 / CFBP 7177 / CIP 109463 / NCPPB 4357 / Et1/99), this protein is Undecaprenyl-diphosphatase.